The following is a 122-amino-acid chain: Large ribosomal subunit protein uL14 (122 aa).

It belongs to the universal ribosomal protein uL14 family. As to quaternary structure, part of the 50S ribosomal subunit. Forms a cluster with proteins L3 and L19. In the 70S ribosome, L14 and L19 interact and together make contacts with the 16S rRNA in bridges B5 and B8.

Its function is as follows. Binds to 23S rRNA. Forms part of two intersubunit bridges in the 70S ribosome. The chain is Large ribosomal subunit protein uL14 from Moorella thermoacetica (strain ATCC 39073 / JCM 9320).